Reading from the N-terminus, the 228-residue chain is Outer membrane protein assembly factor BamE (228 aa).

Residues 1-29 (MNPILKGVYSPARLGVVALTLFGILGVTG) form the signal peptide. Residue cysteine 30 is the site of N-palmitoyl cysteine attachment. A lipid anchor (S-diacylglycerol cysteine) is attached at cysteine 30. Residues 197 to 228 (DFFGSSKKDPDPQSPQLGPGTLNDVPKPADSK) form a disordered region.

Belongs to the BamE family. As to quaternary structure, part of the Bam complex.

It localises to the cell outer membrane. Functionally, part of the outer membrane protein assembly complex, which is involved in assembly and insertion of beta-barrel proteins into the outer membrane. The sequence is that of Outer membrane protein assembly factor BamE from Polynucleobacter necessarius subsp. necessarius (strain STIR1).